The chain runs to 459 residues: Probable 3-ketoacyl-CoA synthase 14 (459 aa).

The signal sequence occupies residues 1-25; the sequence is MFIAMADFKLLLLILILLSLFELDL. Residues 32–52 traverse the membrane as a helical segment; it reads FFSPFPVKIGLLLISIFFYAY. Residues 52–334 enclose the FAE domain; that stretch reads YSTTRSKPVY…FILFLVKSKL (283 aa). Catalysis depends on residues His-268, His-352, His-356, His-385, and Asn-389.

This sequence belongs to the thiolase-like superfamily. Chalcone/stilbene synthases family. In terms of tissue distribution, expressed in siliques.

Its subcellular location is the membrane. It catalyses the reaction a very-long-chain acyl-CoA + malonyl-CoA + H(+) = a very-long-chain 3-oxoacyl-CoA + CO2 + CoA. The protein operates within lipid metabolism; fatty acid biosynthesis. This is Probable 3-ketoacyl-CoA synthase 14 from Arabidopsis thaliana (Mouse-ear cress).